The following is an 87-amino-acid chain: NAD(P)H-quinone oxidoreductase subunit O (87 aa).

The span at 1–10 (MSEQTGKVDD) shows a compositional bias: basic and acidic residues. The tract at residues 1–26 (MSEQTGKVDDSQSPPKVQKKLRKGDL) is disordered.

This sequence belongs to the complex I NdhO subunit family. As to quaternary structure, NDH-1 can be composed of about 15 different subunits; different subcomplexes with different compositions have been identified which probably have different functions.

It is found in the cellular thylakoid membrane. The enzyme catalyses a plastoquinone + NADH + (n+1) H(+)(in) = a plastoquinol + NAD(+) + n H(+)(out). It catalyses the reaction a plastoquinone + NADPH + (n+1) H(+)(in) = a plastoquinol + NADP(+) + n H(+)(out). In terms of biological role, NDH-1 shuttles electrons from an unknown electron donor, via FMN and iron-sulfur (Fe-S) centers, to quinones in the respiratory and/or the photosynthetic chain. The immediate electron acceptor for the enzyme in this species is believed to be plastoquinone. Couples the redox reaction to proton translocation, and thus conserves the redox energy in a proton gradient. Cyanobacterial NDH-1 also plays a role in inorganic carbon-concentration. The sequence is that of NAD(P)H-quinone oxidoreductase subunit O from Prochlorococcus marinus (strain NATL1A).